The following is a 572-amino-acid chain: BOS complex subunit ncln (572 aa).

Positions 1–35 are cleaved as a signal peptide; sequence MFEEAGEVLENMLKVSFPLSLVLFLVLVCPLRAEA. The Extracellular portion of the chain corresponds to 36–530; it reads AHEFSVYRMQ…TMNAYRVKPA (495 aa). N-linked (GlcNAc...) asparagine glycosylation is found at Asn-108, Asn-234, and Asn-436. A helical membrane pass occupies residues 531–551; that stretch reads IFDLLLAVCIASYLGVLYLAI. Residues 552 to 572 are Cytoplasmic-facing; that stretch reads QNFGLLYGFLRRVTAPRVKQH.

This sequence belongs to the nicastrin family. In terms of assembly, component of the multi-pass translocon (MPT) complex.

Its subcellular location is the endoplasmic reticulum membrane. Functionally, component of the multi-pass translocon (MPT) complex that mediates insertion of multi-pass membrane proteins into the lipid bilayer of membranes. The MPT complex takes over after the SEC61 complex: following membrane insertion of the first few transmembrane segments of proteins by the SEC61 complex, the MPT complex occludes the lateral gate of the SEC61 complex to promote insertion of subsequent transmembrane regions. Antagonizes Nodal signaling and subsequent organization of axial structures during mesodermal patterning. Ectopic expression results in cyclopia, due to a defect in mesendoderm patterning. This chain is BOS complex subunit ncln (ncln), found in Danio rerio (Zebrafish).